The following is a 120-amino-acid chain: KLVALYQKEMSYAGEIVPLSELFFRDEQILGDDEQEVINGEQVPELMNHLYGKLEVLEPFEAAEIKKTIKEVQKETGIKGKQLFMPIRVAVTGQMHGPELPNTIEVLGREKVLSRLKKYV.

This sequence belongs to the class-I aminoacyl-tRNA synthetase family. Glutamate--tRNA ligase type 1 subfamily. As to quaternary structure, monomer.

The protein resides in the cytoplasm. The enzyme catalyses tRNA(Glu) + L-glutamate + ATP = L-glutamyl-tRNA(Glu) + AMP + diphosphate. Its function is as follows. Catalyzes the attachment of glutamate to tRNA(Glu) in a two-step reaction: glutamate is first activated by ATP to form Glu-AMP and then transferred to the acceptor end of tRNA(Glu). This Staphylococcus xylosus protein is Glutamate--tRNA ligase (gltX).